The primary structure comprises 209 residues: Protein-L-isoaspartate O-methyltransferase (209 aa).

The active site involves serine 59.

This sequence belongs to the methyltransferase superfamily. L-isoaspartyl/D-aspartyl protein methyltransferase family.

It is found in the cytoplasm. The enzyme catalyses [protein]-L-isoaspartate + S-adenosyl-L-methionine = [protein]-L-isoaspartate alpha-methyl ester + S-adenosyl-L-homocysteine. In terms of biological role, catalyzes the methyl esterification of L-isoaspartyl residues in peptides and proteins that result from spontaneous decomposition of normal L-aspartyl and L-asparaginyl residues. It plays a role in the repair and/or degradation of damaged proteins. In Helicobacter pylori (strain P12), this protein is Protein-L-isoaspartate O-methyltransferase.